Reading from the N-terminus, the 132-residue chain is N,N-dimethylformamidase alpha subunit (132 aa).

Heterotetramer of two DmfA1 (alpha) and two DmfA2 (beta) subunits.

It carries out the reaction N,N-dimethylformamide + H2O = dimethylamine + formate. With respect to regulation, activity is slightly inhibited by Mg(2+) and Mn(2+), and slightly increased by Cu(2+). Activity is slightly inhibited by the chelating agents 8-hydroxyquinoline, ethylenediaminetetraacetate, o-phenanthroline and 2,2'-bipyridyl. Its function is as follows. Hydrolyzes N,N-dimethylformamide, and to a lesser extent N,N-dimethylacetamide and N,N-diethylacetamide. Has no activity against the substituted amides N-methylformamide, N-ethylformamide, N-ethylformamide and N-methylacetamide or the unsubstituted amides formamide, nicotinamide, acetoamide, benzamide, acetamide and acrylamide. The sequence is that of N,N-dimethylformamidase alpha subunit from Alcaligenes sp.